Consider the following 243-residue polypeptide: Killer cell lectin-like receptor subfamily I member 1 (243 aa).

The Cytoplasmic portion of the chain corresponds to 1–80; sequence MPHSKHRDYT…RQGPKSAVWR (80 aa). 2 consecutive short sequence motifs (ITIM motif) follow at residues 16–21 and 47–52; these read IPYTEL and LKYAEL. A helical; Signal-anchor for type II membrane protein membrane pass occupies residues 81–101; it reads VVTCVLGVLCVVLMITMGILV. At 102-243 the chain is on the extracellular side; sequence PKLFSGQEEQ…KPYACEFNKM (142 aa). N-linked (GlcNAc...) asparagine glycosylation is found at Asn123, Asn191, Asn194, Asn200, and Asn214. Residues 137–239 form the C-type lectin domain; that stretch reads FGNNFYLFFR…CSSKKPYACE (103 aa). Disulfide bonds link Cys158–Cys238 and Cys217–Cys230.

Heterodimer with KLRE1. Interacts with PTPN6. In terms of tissue distribution, expressed in natural killer (NK) cells.

It is found in the cell membrane. Functionally, lectin-like receptor for natural killer (NK) cells. Heterodimer formation with KLRE1 mediates inhibition of NK cell cytolytic activity. The protein is Killer cell lectin-like receptor subfamily I member 1 of Rattus norvegicus (Rat).